The sequence spans 103 residues: Co-chaperonin GroES (103 aa).

It belongs to the GroES chaperonin family. As to quaternary structure, heptamer of 7 subunits arranged in a ring. Interacts with the chaperonin GroEL.

The protein localises to the cytoplasm. Its function is as follows. Together with the chaperonin GroEL, plays an essential role in assisting protein folding. The GroEL-GroES system forms a nano-cage that allows encapsulation of the non-native substrate proteins and provides a physical environment optimized to promote and accelerate protein folding. GroES binds to the apical surface of the GroEL ring, thereby capping the opening of the GroEL channel. This Prochlorococcus marinus (strain MIT 9211) protein is Co-chaperonin GroES.